A 120-amino-acid polypeptide reads, in one-letter code: Large ribosomal subunit protein uL18 (120 aa).

It belongs to the universal ribosomal protein uL18 family. As to quaternary structure, part of the 50S ribosomal subunit; part of the 5S rRNA/L5/L18/L25 subcomplex. Contacts the 5S and 23S rRNAs.

In terms of biological role, this is one of the proteins that bind and probably mediate the attachment of the 5S RNA into the large ribosomal subunit, where it forms part of the central protuberance. The sequence is that of Large ribosomal subunit protein uL18 from Staphylococcus epidermidis (strain ATCC 35984 / DSM 28319 / BCRC 17069 / CCUG 31568 / BM 3577 / RP62A).